A 197-amino-acid polypeptide reads, in one-letter code: MIGLNTAAIYILQTLGSLYLLIVLLRFILQLVRADFYNPLSQFIVRATKPLLNPLRRIIPGFGGIDLASLVLAILIQLVLMILILMLMGYGVGGFIMQLLIWSIIAVTSLFLKVFFFALIISVILSWVAPGSYNPGAQLVNQICEPLLMPFRKLLPNLGGLDLSPIFAFLALKLIDMLVINNLAAMTGMPQQLSIFL.

Transmembrane regions (helical) follow at residues 9–29 (IYILQTLGSLYLLIVLLRFIL), 67–87 (LASLVLAILIQLVLMILILML), 104–124 (IIAVTSLFLKVFFFALIISVI), and 160–180 (GLDLSPIFAFLALKLIDMLVI).

This sequence belongs to the YggT family.

The protein resides in the cell membrane. This is an uncharacterized protein from Pseudomonas aeruginosa (strain ATCC 15692 / DSM 22644 / CIP 104116 / JCM 14847 / LMG 12228 / 1C / PRS 101 / PAO1).